We begin with the raw amino-acid sequence, 453 residues long: Bifunctional protein GlmU (453 aa).

The pyrophosphorylase stretch occupies residues 1 to 231 (MERTCLAVIL…EIEMTGCNTR (231 aa)). UDP-N-acetyl-alpha-D-glucosamine is bound by residues 10–13 (LAAG), Lys24, Gln77, 82–83 (GT), 105–107 (YGD), Gly143, Glu157, Asn172, and Asn229. Asp107 lines the Mg(2+) pocket. Residue Asn229 coordinates Mg(2+). The segment at 232-252 (AELAVIERFWQERRRHQMMLS) is linker. The interval 253-453 (GVTMIAPETV…AIKAAKKAKA (201 aa)) is N-acetyltransferase. Arg318 and Lys336 together coordinate UDP-N-acetyl-alpha-D-glucosamine. The active-site Proton acceptor is His348. Positions 351 and 362 each coordinate UDP-N-acetyl-alpha-D-glucosamine. Residues Ala365, 371–372 (NY), Ser390, Ser408, and Arg425 contribute to the acetyl-CoA site.

This sequence in the N-terminal section; belongs to the N-acetylglucosamine-1-phosphate uridyltransferase family. It in the C-terminal section; belongs to the transferase hexapeptide repeat family. As to quaternary structure, homotrimer. Mg(2+) is required as a cofactor.

It localises to the cytoplasm. It carries out the reaction alpha-D-glucosamine 1-phosphate + acetyl-CoA = N-acetyl-alpha-D-glucosamine 1-phosphate + CoA + H(+). The catalysed reaction is N-acetyl-alpha-D-glucosamine 1-phosphate + UTP + H(+) = UDP-N-acetyl-alpha-D-glucosamine + diphosphate. The protein operates within nucleotide-sugar biosynthesis; UDP-N-acetyl-alpha-D-glucosamine biosynthesis; N-acetyl-alpha-D-glucosamine 1-phosphate from alpha-D-glucosamine 6-phosphate (route II): step 2/2. It functions in the pathway nucleotide-sugar biosynthesis; UDP-N-acetyl-alpha-D-glucosamine biosynthesis; UDP-N-acetyl-alpha-D-glucosamine from N-acetyl-alpha-D-glucosamine 1-phosphate: step 1/1. It participates in bacterial outer membrane biogenesis; LPS lipid A biosynthesis. Catalyzes the last two sequential reactions in the de novo biosynthetic pathway for UDP-N-acetylglucosamine (UDP-GlcNAc). The C-terminal domain catalyzes the transfer of acetyl group from acetyl coenzyme A to glucosamine-1-phosphate (GlcN-1-P) to produce N-acetylglucosamine-1-phosphate (GlcNAc-1-P), which is converted into UDP-GlcNAc by the transfer of uridine 5-monophosphate (from uridine 5-triphosphate), a reaction catalyzed by the N-terminal domain. This chain is Bifunctional protein GlmU, found in Rhizobium johnstonii (strain DSM 114642 / LMG 32736 / 3841) (Rhizobium leguminosarum bv. viciae).